Here is a 113-residue protein sequence, read N- to C-terminus: MIEGVGVDIVAVERIKKIYEKCGEKFLNKVFTEGEISYSFSHANPFPHLAARFAVKEAVIKALKKQKGLTLKNIEVRNNSDGSPEVKIPGFNKKIFISISHEKNYAVAFVVIT.

Positions 8 and 57 each coordinate Mg(2+).

This sequence belongs to the P-Pant transferase superfamily. AcpS family. It depends on Mg(2+) as a cofactor.

It is found in the cytoplasm. It carries out the reaction apo-[ACP] + CoA = holo-[ACP] + adenosine 3',5'-bisphosphate + H(+). In terms of biological role, transfers the 4'-phosphopantetheine moiety from coenzyme A to a Ser of acyl-carrier-protein. This chain is Holo-[acyl-carrier-protein] synthase, found in Thermodesulfovibrio yellowstonii (strain ATCC 51303 / DSM 11347 / YP87).